An 80-amino-acid polypeptide reads, in one-letter code: Trefoil factor 3 (80 aa).

An N-terminal signal peptide occupies residues 1 to 21 (MAARALCMLGLVLALLSSSSA). The P-type domain maps to 30–73 (NQCAVPAKDRVDCGYPHVTPKECNNRGCCFDSRIPGVPWCFKPL). 3 cysteine pairs are disulfide-bonded: Cys-32–Cys-58, Cys-42–Cys-57, and Cys-52–Cys-69.

In terms of assembly, monomer. Homodimer; disulfide-linked. As to expression, expressed in goblet cells of the intestines and colon (at protein level). Expressed by goblet cells of small and large intestinal epithelia and also by the uterus. Also expressed in the hypothalamus where it is detected in paraventricular, periventricular and supraoptic nuclei (at protein level).

The protein resides in the secreted. It is found in the extracellular space. Its subcellular location is the extracellular matrix. The protein localises to the cytoplasm. In terms of biological role, involved in the maintenance and repair of the intestinal mucosa. Promotes the mobility of epithelial cells in healing processes (motogen). This chain is Trefoil factor 3 (TFF3), found in Homo sapiens (Human).